Reading from the N-terminus, the 505-residue chain is Ikaros family zinc finger protein (505 aa).

4 consecutive C2H2-type zinc fingers follow at residues 18 to 40, 46 to 68, 74 to 96, and 102 to 128; these read LTCE…KRSH, FQCN…VKLH, FKCS…IRTH, and YKCN…PGFH. 2 stretches are compositionally biased toward polar residues: residues 262-273 and 309-327; these read FLNTPSPVTRSA and RFQH…SQQP. Disordered regions lie at residues 262–296 and 309–440; these read FLNT…DIGS and RFQH…VSGS. Positions 336-345 are enriched in gly residues; that stretch reads ILGGSLGGIC. Residues 366–377 show a composition bias toward polar residues; that stretch reads ATSSPSNSCPDS. Over residues 393–406 the composition is skewed to low complexity; sequence GSGSSTSRPNGSTG. Residues 409–419 are compositionally biased toward basic and acidic residues; it reads HRPEMHQDNGR. Positions 424 to 439 are enriched in polar residues; that stretch reads SGASDSSSLPTYNVSG. 2 consecutive C2H2-type zinc fingers follow at residues 448 to 470 and 476 to 500; these read YPCH…MGCH and FECN…RGEH.

It belongs to the Ikaros C2H2-type zinc-finger protein family. As to quaternary structure, heterodimer and homodimer with other IKAROS family members. In terms of tissue distribution, expression is strongest in the blood, gills and intestine.

It localises to the nucleus. This chain is Ikaros family zinc finger protein, found in Myxine glutinosa (Atlantic hagfish).